The sequence spans 101 residues: Small ribosomal subunit protein uS14A (101 aa).

Residues 35-56 form a disordered region; it reads TSSYEQRLDAQRALSRQPRDAS.

The protein belongs to the universal ribosomal protein uS14 family. In terms of assembly, part of the 30S ribosomal subunit. Contacts proteins S3 and S10.

Its function is as follows. Binds 16S rRNA, required for the assembly of 30S particles and may also be responsible for determining the conformation of the 16S rRNA at the A site. In Mycobacterium marinum (strain ATCC BAA-535 / M), this protein is Small ribosomal subunit protein uS14A.